The sequence spans 300 residues: Quinolinate synthase (300 aa).

Positions 21 and 38 each coordinate iminosuccinate. [4Fe-4S] cluster is bound at residue Cys-83. Iminosuccinate contacts are provided by residues 109-111 (YVN) and Ser-126. Residue Cys-170 participates in [4Fe-4S] cluster binding. Iminosuccinate is bound by residues 196-198 (HPE) and Thr-213. Cys-256 contacts [4Fe-4S] cluster.

It belongs to the quinolinate synthase family. Type 2 subfamily. As to quaternary structure, monomer. Homodimer. The cofactor is [4Fe-4S] cluster.

The protein resides in the cytoplasm. The enzyme catalyses iminosuccinate + dihydroxyacetone phosphate = quinolinate + phosphate + 2 H2O + H(+). Its pathway is cofactor biosynthesis; NAD(+) biosynthesis; quinolinate from iminoaspartate: step 1/1. Its function is as follows. Catalyzes the condensation of iminoaspartate with dihydroxyacetone phosphate to form quinolinate. This Pyrococcus horikoshii (strain ATCC 700860 / DSM 12428 / JCM 9974 / NBRC 100139 / OT-3) protein is Quinolinate synthase.